The following is a 314-amino-acid chain: MSMLAPLRLVREPWNASEGNQSNATAGAGGAWCQGLDIPNELFLTLGLVSLVENLLVVAAILKNRNLHSPTYYFICCLAVSDMLVSVSNLAKTLFMLLMEHGVLVIRASIVRHMDNVIDMLICSSVVSSLSFLGVIAVDRYITIFYALRYHSIMTLQRAVVTMASVWLASTVSSTVLITYYRNNAILLCLIGFFLFMLVLMLVLYIHMFALACHHVRSISSQQKQPTIYRTSSLKGAVTLTILLGVFFICWGPFFFHLILIVTCPTNPFCTCFFSYFNLFLILIICNSVVDPLIYAFRSQELRRTLREVVLCSW.

Residues 1-35 (MSMLAPLRLVREPWNASEGNQSNATAGAGGAWCQG) lie on the Extracellular side of the membrane. 3 N-linked (GlcNAc...) asparagine glycosylation sites follow: asparagine 15, asparagine 20, and asparagine 23. A helical transmembrane segment spans residues 36–61 (LDIPNELFLTLGLVSLVENLLVVAAI). Topologically, residues 62–70 (LKNRNLHSP) are cytoplasmic. The chain crosses the membrane as a helical span at residues 71–91 (TYYFICCLAVSDMLVSVSNLA). Residues 92–116 (KTLFMLLMEHGVLVIRASIVRHMDN) are Extracellular-facing. Residues 117–138 (VIDMLICSSVVSSLSFLGVIAV) form a helical membrane-spanning segment. Residues 139 to 161 (DRYITIFYALRYHSIMTLQRAVV) are Cytoplasmic-facing. A helical membrane pass occupies residues 162–181 (TMASVWLASTVSSTVLITYY). The Extracellular portion of the chain corresponds to 182–189 (RNNAILLC). A helical transmembrane segment spans residues 190-209 (LIGFFLFMLVLMLVLYIHMF). The Cytoplasmic segment spans residues 210 to 237 (ALACHHVRSISSQQKQPTIYRTSSLKGA). The helical transmembrane segment at 238 to 263 (VTLTILLGVFFICWGPFFFHLILIVT) threads the bilayer. At 264 to 276 (CPTNPFCTCFFSY) the chain is on the extracellular side. The chain crosses the membrane as a helical span at residues 277–297 (FNLFLILIICNSVVDPLIYAF). Residues 298-314 (RSQELRRTLREVVLCSW) are Cytoplasmic-facing. The S-palmitoyl cysteine moiety is linked to residue cysteine 312.

The protein belongs to the G-protein coupled receptor 1 family.

The protein resides in the cell membrane. Receptor for MSH (alpha, beta and gamma) and ACTH. The activity of this receptor is mediated by G proteins which activate adenylate cyclase. Mediates melanogenesis via regulation of cAMP signaling in melanocytes. The sequence is that of Melanocyte-stimulating hormone receptor (MC1R) from Gallus gallus (Chicken).